A 407-amino-acid polypeptide reads, in one-letter code: Imidazolonepropionase (407 aa).

2 residues coordinate Fe(3+): His68 and His70. Zn(2+)-binding residues include His68 and His70. 4-imidazolone-5-propanoate is bound by residues Arg77, Tyr140, and His173. Tyr140 contacts N-formimidoyl-L-glutamate. Residue His238 coordinates Fe(3+). A Zn(2+)-binding site is contributed by His238. Residue Gln241 participates in 4-imidazolone-5-propanoate binding. Asp313 provides a ligand contact to Fe(3+). Asp313 is a binding site for Zn(2+). Residues Asn315 and Gly317 each coordinate N-formimidoyl-L-glutamate. Thr318 serves as a coordination point for 4-imidazolone-5-propanoate.

It belongs to the metallo-dependent hydrolases superfamily. HutI family. Requires Zn(2+) as cofactor. It depends on Fe(3+) as a cofactor.

The protein localises to the cytoplasm. It carries out the reaction 4-imidazolone-5-propanoate + H2O = N-formimidoyl-L-glutamate. The protein operates within amino-acid degradation; L-histidine degradation into L-glutamate; N-formimidoyl-L-glutamate from L-histidine: step 3/3. Functionally, catalyzes the hydrolytic cleavage of the carbon-nitrogen bond in imidazolone-5-propanoate to yield N-formimidoyl-L-glutamate. It is the third step in the universal histidine degradation pathway. The protein is Imidazolonepropionase of Burkholderia multivorans (strain ATCC 17616 / 249).